The following is a 268-amino-acid chain: Ribosomal RNA small subunit methyltransferase A (268 aa).

Residues asparagine 18, leucine 20, glycine 45, glutamate 66, aspartate 91, and asparagine 112 each contribute to the S-adenosyl-L-methionine site.

Belongs to the class I-like SAM-binding methyltransferase superfamily. rRNA adenine N(6)-methyltransferase family. RsmA subfamily.

Its subcellular location is the cytoplasm. It catalyses the reaction adenosine(1518)/adenosine(1519) in 16S rRNA + 4 S-adenosyl-L-methionine = N(6)-dimethyladenosine(1518)/N(6)-dimethyladenosine(1519) in 16S rRNA + 4 S-adenosyl-L-homocysteine + 4 H(+). In terms of biological role, specifically dimethylates two adjacent adenosines (A1518 and A1519) in the loop of a conserved hairpin near the 3'-end of 16S rRNA in the 30S particle. May play a critical role in biogenesis of 30S subunits. This Shewanella oneidensis (strain ATCC 700550 / JCM 31522 / CIP 106686 / LMG 19005 / NCIMB 14063 / MR-1) protein is Ribosomal RNA small subunit methyltransferase A.